Here is a 488-residue protein sequence, read N- to C-terminus: Lysine--tRNA ligase (488 aa).

Residues glutamate 398 and glutamate 405 each coordinate Mg(2+).

Belongs to the class-II aminoacyl-tRNA synthetase family. Homodimer. Mg(2+) is required as a cofactor.

The protein resides in the cytoplasm. The catalysed reaction is tRNA(Lys) + L-lysine + ATP = L-lysyl-tRNA(Lys) + AMP + diphosphate. This Carboxydothermus hydrogenoformans (strain ATCC BAA-161 / DSM 6008 / Z-2901) protein is Lysine--tRNA ligase.